A 266-amino-acid chain; its full sequence is Small ribosomal subunit protein uS3 (266 aa).

The 69-residue stretch at 39–107 (VREYLKKKLK…PVHVNIEEIR (69 aa)) folds into the KH type-2 domain. Residues 214–266 (PVVEEVTEDKRPRRNARPGDRRPRRDGEGGAPGARRGGPRRGAGKPEDGKTGE) are disordered. Composition is skewed to basic and acidic residues over residues 230-241 (RPGDRRPRRDGE) and 257-266 (GKPEDGKTGE).

The protein belongs to the universal ribosomal protein uS3 family. As to quaternary structure, part of the 30S ribosomal subunit. Forms a tight complex with proteins S10 and S14.

Its function is as follows. Binds the lower part of the 30S subunit head. Binds mRNA in the 70S ribosome, positioning it for translation. In Burkholderia thailandensis (strain ATCC 700388 / DSM 13276 / CCUG 48851 / CIP 106301 / E264), this protein is Small ribosomal subunit protein uS3.